A 215-amino-acid polypeptide reads, in one-letter code: Putative BTB/POZ domain-containing protein At2g05330 (215 aa).

A BTB domain is found at 17–87 (SWQKIGKLTY…LYSDGSMLSS (71 aa)).

It functions in the pathway protein modification; protein ubiquitination. Functionally, may act as a substrate-specific adapter of an E3 ubiquitin-protein ligase complex (CUL3-RBX1-BTB) which mediates the ubiquitination and subsequent proteasomal degradation of target proteins. This chain is Putative BTB/POZ domain-containing protein At2g05330, found in Arabidopsis thaliana (Mouse-ear cress).